The following is a 137-amino-acid chain: Nucleoside diphosphate kinase (137 aa).

6 residues coordinate ATP: Lys-9, Phe-57, Arg-85, Thr-91, Arg-102, and Asn-112. His-115 serves as the catalytic Pros-phosphohistidine intermediate.

Belongs to the NDK family. In terms of assembly, homotetramer. The cofactor is Mg(2+).

The protein localises to the cytoplasm. It catalyses the reaction a 2'-deoxyribonucleoside 5'-diphosphate + ATP = a 2'-deoxyribonucleoside 5'-triphosphate + ADP. It carries out the reaction a ribonucleoside 5'-diphosphate + ATP = a ribonucleoside 5'-triphosphate + ADP. Functionally, major role in the synthesis of nucleoside triphosphates other than ATP. The ATP gamma phosphate is transferred to the NDP beta phosphate via a ping-pong mechanism, using a phosphorylated active-site intermediate. This is Nucleoside diphosphate kinase from Nitratiruptor sp. (strain SB155-2).